The chain runs to 185 residues: Ribosome-recycling factor (185 aa).

It belongs to the RRF family.

The protein resides in the cytoplasm. Functionally, responsible for the release of ribosomes from messenger RNA at the termination of protein biosynthesis. May increase the efficiency of translation by recycling ribosomes from one round of translation to another. In Coxiella burnetii (strain RSA 493 / Nine Mile phase I), this protein is Ribosome-recycling factor.